A 403-amino-acid polypeptide reads, in one-letter code: 26S proteasome regulatory subunit 8 homolog (403 aa).

ATP is bound at residue 186–193; it reads GPPGTGKT.

Belongs to the AAA ATPase family.

Its subcellular location is the cytoplasm. It localises to the nucleus. In terms of biological role, the 26S proteasome is involved in the ATP-dependent degradation of ubiquitinated proteins. The regulatory (or ATPase) complex confers ATP dependency and substrate specificity to the 26S complex. This chain is 26S proteasome regulatory subunit 8 homolog (let1), found in Schizosaccharomyces pombe (strain 972 / ATCC 24843) (Fission yeast).